The sequence spans 574 residues: PI-PLC X domain-containing protein DDB_G0269228 (574 aa).

The disordered stretch occupies residues 1-42 (MFSSIMFKKKPKQNLNENEITSQSTTTTSTLSDSKPSEKKIK). A compositionally biased stretch (low complexity) spans 21-34 (TSQSTTTTSTLSDS). One can recognise a PI-PLC X-box domain in the interval 270-449 (GIKSSSLRVP…LKKRIINDDG (180 aa)).

The sequence is that of PI-PLC X domain-containing protein DDB_G0269228 from Dictyostelium discoideum (Social amoeba).